Consider the following 119-residue polypeptide: MSINKNIARLRRAKSTRSHIRDLGVARLSVLRTGQHLYAQVFTADGSKVIAAANTLQADVKDGLKNGKNSDAAVKVGKLIAERAKAAGIEKVAFDRSGYRYHGRIKALADAAREGGLQF.

This sequence belongs to the universal ribosomal protein uL18 family. Part of the 50S ribosomal subunit; part of the 5S rRNA/L5/L18/L25 subcomplex. Contacts the 5S and 23S rRNAs.

This is one of the proteins that bind and probably mediate the attachment of the 5S RNA into the large ribosomal subunit, where it forms part of the central protuberance. In Xanthomonas oryzae pv. oryzae (strain PXO99A), this protein is Large ribosomal subunit protein uL18.